A 400-amino-acid polypeptide reads, in one-letter code: uncharacterized protein (400 aa).

In terms of domain architecture, TR mART core spans 161-380 (NDLLNIIDIV…YVVKVIVMRL (220 aa)).

This is an uncharacterized protein from Acanthamoeba polyphaga (Amoeba).